Consider the following 1409-residue polypeptide: Receptor-type tyrosine-protein phosphatase (1409 aa).

An N-terminal signal peptide occupies residues 1-22 (MRINRWIWWATVILLYLRTGLA). Topologically, residues 23 to 712 (ADFFRSSEEN…LLDTESSSSG (690 aa)) are extracellular. The disordered stretch occupies residues 32–53 (NDRKSSDDLDNFNSTKIEPDKP). The Ig-like C2-type domain occupies 159–267 (PTKCDKRDLA…TASASDLDVT (109 aa)). C189 and C255 are joined by a disulfide. 2 consecutive Fibronectin type-III domains span residues 276–366 (APRQ…TKQK) and 372–502 (KEED…AQPD). A helical transmembrane segment spans residues 713-733 (FGIFMKIILPFLLFLAFATGV). The Cytoplasmic portion of the chain corresponds to 734–1409 (TMFFVNRKGH…LADYISKTYR (676 aa)). 2 Tyrosine-protein phosphatase domains span residues 793–1072 (FAQE…LAEW) and 1135–1403 (LEEE…LADY). Residues C1013 and C1344 each act as phosphocysteine intermediate in the active site.

The protein belongs to the protein-tyrosine phosphatase family. Receptor class 2A subfamily. As to expression, expressed in muscles, hypodermis and a subset of neurons. Expressed in the AVA neurons, with high expression in the anterior half of the preanal ganglion where AVA neurons contact the PHB neurons.

It is found in the cell membrane. It localises to the synapse. The catalysed reaction is O-phospho-L-tyrosyl-[protein] + H2O = L-tyrosyl-[protein] + phosphate. In terms of biological role, possesses an intrinsic protein tyrosine phosphatase (PTPase) activity. Regulates egl-15 activity which is required for hypodermis-mediated fluid homeostasis and protein degradation in muscle. During the formation of neuromuscular junctions at the larval stage, negatively regulates membrane protrusion from body wall muscles. Plays a role in nicotinic acetylcholine receptor (nAChR)-mediated sensitivity to nicotine. Regulates synaptic levels of nAchR subunit lev-1 in the nerve cord. Promotes the outgrowth of the quaternary dendritic branches of the PVD sensory neurons. In parallel to the sax-7/mnr-1 pathway, also controls the extension of the PVD primary branches. Acts in the netrin/DCC pathway to mediate the formation of synapses between the AVA interneurons and the PHB sensory neurons. Also required for the formation of synapses between the AVA interneurons and the VA10 motor neurons. The protein is Receptor-type tyrosine-protein phosphatase of Caenorhabditis elegans.